Here is a 189-residue protein sequence, read N- to C-terminus: Cell division protein SepF (189 aa).

Positions 152–163 (FQEEPSPSSVMN) are enriched in polar residues. The disordered stretch occupies residues 152-189 (FQEEPSPSSVMNKDNEGPVSESVMAPEPAWGASVPSAI).

It belongs to the SepF family. In terms of assembly, homodimer. Interacts with FtsZ.

The protein localises to the cytoplasm. Functionally, cell division protein that is part of the divisome complex and is recruited early to the Z-ring. Probably stimulates Z-ring formation, perhaps through the cross-linking of FtsZ protofilaments. Its function overlaps with FtsA. This Prochlorococcus marinus (strain SARG / CCMP1375 / SS120) protein is Cell division protein SepF.